A 151-amino-acid chain; its full sequence is Putative calcium-binding protein CML23 (151 aa).

4 consecutive EF-hand domains span residues 2–37, 39–74, 84–119, and 120–151; these read VASDEFRRVFGSFDQDGDGKISATELRLCVKASLGE, MPDEEVQALMALADTDGDGLLDEEEFVRLVTEMEAD, ETCRCLREAFAMYEMEGRGCITPLSLKLMLSKLGTH, and LDVAECQAMICRFDMNGDGVLTFDEFKTMMMA. The Ca(2+) site is built by Asp15, Asp17, Asp19, Lys21, Glu26, Asp52, Asp54, Asp56, and Glu63. Residues Asp133, Asn135, Asp137, and Glu144 each coordinate Ca(2+).

In terms of biological role, potential calcium sensor. The protein is Putative calcium-binding protein CML23 (CML23) of Oryza sativa subsp. japonica (Rice).